Consider the following 701-residue polypeptide: Elongation factor G (701 aa).

The 283-residue stretch at 8–290 (KHYRNIGISA…AVIEYLPAPI (283 aa)) folds into the tr-type G domain. GTP contacts are provided by residues 17-24 (AHIDAGKT), 88-92 (DTPGH), and 142-145 (NKMD).

Belongs to the TRAFAC class translation factor GTPase superfamily. Classic translation factor GTPase family. EF-G/EF-2 subfamily.

The protein resides in the cytoplasm. Functionally, catalyzes the GTP-dependent ribosomal translocation step during translation elongation. During this step, the ribosome changes from the pre-translocational (PRE) to the post-translocational (POST) state as the newly formed A-site-bound peptidyl-tRNA and P-site-bound deacylated tRNA move to the P and E sites, respectively. Catalyzes the coordinated movement of the two tRNA molecules, the mRNA and conformational changes in the ribosome. In Hamiltonella defensa subsp. Acyrthosiphon pisum (strain 5AT), this protein is Elongation factor G.